A 515-amino-acid polypeptide reads, in one-letter code: AAA ATPase forming ring-shaped complexes (515 aa).

Positions 2-49 (NDHDEETLASLQQANDQLMAKNHALVKALSRATQEMTKTKAQLNQLAG) form a coiled coil. Residue 240 to 245 (GNGKTL) coordinates ATP.

Belongs to the AAA ATPase family. As to quaternary structure, homohexamer. Assembles into a hexameric ring structure.

This Bifidobacterium adolescentis (strain ATCC 15703 / DSM 20083 / NCTC 11814 / E194a) protein is AAA ATPase forming ring-shaped complexes.